The chain runs to 125 residues: Phosphoribosyl-AMP cyclohydrolase (125 aa).

Aspartate 74 provides a ligand contact to Mg(2+). Residue cysteine 75 coordinates Zn(2+). Aspartate 76 and aspartate 78 together coordinate Mg(2+). Cysteine 92 and cysteine 99 together coordinate Zn(2+).

Belongs to the PRA-CH family. Homodimer. The cofactor is Mg(2+). It depends on Zn(2+) as a cofactor.

The protein resides in the cytoplasm. It catalyses the reaction 1-(5-phospho-beta-D-ribosyl)-5'-AMP + H2O = 1-(5-phospho-beta-D-ribosyl)-5-[(5-phospho-beta-D-ribosylamino)methylideneamino]imidazole-4-carboxamide. The protein operates within amino-acid biosynthesis; L-histidine biosynthesis; L-histidine from 5-phospho-alpha-D-ribose 1-diphosphate: step 3/9. Its function is as follows. Catalyzes the hydrolysis of the adenine ring of phosphoribosyl-AMP. This is Phosphoribosyl-AMP cyclohydrolase from Desulfatibacillum aliphaticivorans.